The chain runs to 58 residues: Small ribosomal subunit protein bS21B (58 aa).

Belongs to the bacterial ribosomal protein bS21 family.

This is Small ribosomal subunit protein bS21B from Trichormus variabilis (strain ATCC 29413 / PCC 7937) (Anabaena variabilis).